The sequence spans 1034 residues: Ice nucleation protein InaU (1034 aa).

The interval 162–993 is octapeptide periodicity; that stretch reads ATYGSTLSGT…LTAGENSVLI (832 aa). 6 disordered regions span residues 260 to 287, 311 to 342, 356 to 383, 407 to 438, 452 to 480, and 570 to 597; these read YGST…KGSD, TQTA…GYGS, YGST…GSDL, and AREG…TGYG. Composition is skewed to polar residues over residues 261-286, 311-334, 357-382, 407-430, 453-480, and 580-592; these read GSTQ…QKGS, TQTA…QKGS, GSTQ…GSDL, and YGST…NSDL.

This sequence belongs to the bacterial ice nucleation protein family.

The protein localises to the cell outer membrane. Its function is as follows. Ice nucleation proteins enable bacteria to nucleate crystallization in supercooled water. This chain is Ice nucleation protein InaU (inaU), found in Pantoea ananas (Erwinia uredovora).